The following is a 196-amino-acid chain: MARADKATAVADIAEQFKEATATLITEYRGLTVANLAELRRSLSGAATYSVAKNTLVKRAASEAGIEGLDELFAGPTAIAFVTGEPVDAAKAIKTFAKEHKALVIKGGYMDGRALSVAEVERIADLESREVLLAKLAGAMKGNLAKAAGLFNAPASQVARLAAALQEKKAAECPAEAPQPAAETPAEAPEAPADAE.

The tract at residues 169 to 196 (KAAECPAEAPQPAAETPAEAPEAPADAE) is disordered. A compositionally biased stretch (low complexity) spans 172–196 (ECPAEAPQPAAETPAEAPEAPADAE).

Belongs to the universal ribosomal protein uL10 family. Part of the ribosomal stalk of the 50S ribosomal subunit. The N-terminus interacts with L11 and the large rRNA to form the base of the stalk. The C-terminus forms an elongated spine to which L12 dimers bind in a sequential fashion forming a multimeric L10(L12)X complex.

Functionally, forms part of the ribosomal stalk, playing a central role in the interaction of the ribosome with GTP-bound translation factors. The chain is Large ribosomal subunit protein uL10 from Mycobacterium avium (strain 104).